Reading from the N-terminus, the 157-residue chain is Peptide methionine sulfoxide reductase MsrA (157 aa).

The active site involves Cys-10.

It belongs to the MsrA Met sulfoxide reductase family.

The catalysed reaction is L-methionyl-[protein] + [thioredoxin]-disulfide + H2O = L-methionyl-(S)-S-oxide-[protein] + [thioredoxin]-dithiol. The enzyme catalyses [thioredoxin]-disulfide + L-methionine + H2O = L-methionine (S)-S-oxide + [thioredoxin]-dithiol. Functionally, has an important function as a repair enzyme for proteins that have been inactivated by oxidation. Catalyzes the reversible oxidation-reduction of methionine sulfoxide in proteins to methionine. The protein is Peptide methionine sulfoxide reductase MsrA of Clostridium perfringens (strain 13 / Type A).